The primary structure comprises 270 residues: uncharacterized protein (270 aa).

2 stretches are compositionally biased toward basic and acidic residues: residues 1 to 13 (MSEF…KDLY) and 49 to 73 (EVER…KEEK). 3 disordered regions span residues 1-76 (MSEF…KQEE), 90-111 (STSP…PQTE), and 204-270 (KKRR…FRTE). A compositionally biased stretch (polar residues) spans 90-102 (STSPAQEEQGSST). The segment covering 204–216 (KKRRPGQKQRAAK) has biased composition (basic residues). Over residues 218 to 235 (LALERTKERDTKAREIKK) the composition is skewed to basic and acidic residues. Over residues 236-253 (QLKKKFHKRGGKKNKKKV) the composition is skewed to basic residues.

This is an uncharacterized protein from Saccharomyces cerevisiae (strain ATCC 204508 / S288c) (Baker's yeast).